The primary structure comprises 131 residues: Leptin receptor overlapping transcript-like 1 (131 aa).

Helical transmembrane passes span 7-27, 32-52, 69-89, and 100-120; these read LISLSFGGAIGLMFLMLGCAL, KYWPLFVLFFYILSPIPYCIA, LAIFLTTGIVVSAFGLPIVFA, and ALVLTGNTVIFATILGFFLVF.

This sequence belongs to the OB-RGRP/VPS55 family. Interacts with RAB13. As to expression, widely expressed, with highest expression in heart, testis, adrenal gland, thymus, and spleen, and lowest expression in lung and skeletal muscle.

It localises to the membrane. In terms of biological role, negatively regulates growth hormone (GH) receptor cell surface expression in liver. May play a role in liver resistance to GH during periods of reduced nutrient availability. This Homo sapiens (Human) protein is Leptin receptor overlapping transcript-like 1 (LEPROTL1).